A 155-amino-acid polypeptide reads, in one-letter code: Molybdopterin synthase catalytic subunit 1 (155 aa).

Residues 101–102 (HR), Lys117, and 124–126 (KKE) contribute to the substrate site.

This sequence belongs to the MoaE family. MOCS2B subfamily. As to quaternary structure, heterotetramer; composed of 2 small (MOCS2A) and 2 large (MOCS2B) subunits.

It is found in the cytoplasm. It carries out the reaction 2 [molybdopterin-synthase sulfur-carrier protein]-C-terminal-Gly-aminoethanethioate + cyclic pyranopterin phosphate + H2O = molybdopterin + 2 [molybdopterin-synthase sulfur-carrier protein]-C-terminal Gly-Gly + 2 H(+). The protein operates within cofactor biosynthesis; molybdopterin biosynthesis. Its function is as follows. Catalytic subunit of the molybdopterin synthase complex, a complex that catalyzes the conversion of precursor Z into molybdopterin. Acts by mediating the incorporation of 2 sulfur atoms from thiocarboxylated MOCS2A into precursor Z to generate a dithiolene group. In Aedes aegypti (Yellowfever mosquito), this protein is Molybdopterin synthase catalytic subunit 1.